The following is a 299-amino-acid chain: uncharacterized protein (299 aa).

The region spanning 1–59 (MDKIHAMQLFIKVAELESFSRAADFFALPKGSVSRQIQALEHQLGTQLLQRTTRRVKLT) is the HTH lysR-type domain. A DNA-binding region (H-T-H motif) is located at residues 19–38 (FSRAADFFALPKGSVSRQIQ).

It belongs to the LysR transcriptional regulatory family.

This is an uncharacterized protein from Escherichia coli (strain K12).